The sequence spans 310 residues: Glycerol-3-phosphate dehydrogenase [NAD(P)+] (310 aa).

NADPH is bound by residues Trp-19, Arg-39, Arg-40, and Lys-87. Sn-glycerol 3-phosphate-binding residues include Lys-87 and Gly-115. Ser-119 contributes to the NADPH binding site. Residues Lys-170, Asp-223, Ser-233, Arg-234, and Asn-235 each contribute to the sn-glycerol 3-phosphate site. Lys-170 functions as the Proton acceptor in the catalytic mechanism. Arg-234 provides a ligand contact to NADPH. Glu-260 is a binding site for NADPH.

Belongs to the NAD-dependent glycerol-3-phosphate dehydrogenase family.

The protein resides in the cytoplasm. It carries out the reaction sn-glycerol 3-phosphate + NAD(+) = dihydroxyacetone phosphate + NADH + H(+). It catalyses the reaction sn-glycerol 3-phosphate + NADP(+) = dihydroxyacetone phosphate + NADPH + H(+). Its pathway is membrane lipid metabolism; glycerophospholipid metabolism. Catalyzes the reduction of the glycolytic intermediate dihydroxyacetone phosphate (DHAP) to sn-glycerol 3-phosphate (G3P), the key precursor for phospholipid synthesis. The protein is Glycerol-3-phosphate dehydrogenase [NAD(P)+] of Synechococcus sp. (strain JA-3-3Ab) (Cyanobacteria bacterium Yellowstone A-Prime).